Reading from the N-terminus, the 299-residue chain is Oxygen-dependent coproporphyrinogen-III oxidase (299 aa).

Residue Ser-92 participates in substrate binding. Residues His-96 and His-106 each coordinate Mn(2+). The active-site Proton donor is His-106. Substrate is bound at residue 108–110; sequence NVR. Mn(2+) is bound by residues His-145 and His-175. Positions 240 to 275 are important for dimerization; sequence YVEFNLVWDRGTLFGLQTGGRTESILMSMPPLVRWE. A substrate-binding site is contributed by 258–260; sequence GGR.

It belongs to the aerobic coproporphyrinogen-III oxidase family. In terms of assembly, homodimer. Requires Mn(2+) as cofactor.

Its subcellular location is the cytoplasm. The enzyme catalyses coproporphyrinogen III + O2 + 2 H(+) = protoporphyrinogen IX + 2 CO2 + 2 H2O. It functions in the pathway porphyrin-containing compound metabolism; protoporphyrin-IX biosynthesis; protoporphyrinogen-IX from coproporphyrinogen-III (O2 route): step 1/1. Its function is as follows. Involved in the heme biosynthesis. Catalyzes the aerobic oxidative decarboxylation of propionate groups of rings A and B of coproporphyrinogen-III to yield the vinyl groups in protoporphyrinogen-IX. The polypeptide is Oxygen-dependent coproporphyrinogen-III oxidase (Escherichia coli O8 (strain IAI1)).